Reading from the N-terminus, the 382-residue chain is Chaperone protein DnaJ (382 aa).

The J domain maps to 5 to 69; that stretch reads DYYEILGVSK…EKRARYDRFG (65 aa). The CR-type zinc-finger motif lies at 137–219; sequence GKETEIEIPR…CGGTGRVKRR (83 aa). Cysteine 150, cysteine 153, cysteine 167, cysteine 170, cysteine 193, cysteine 196, cysteine 207, and cysteine 210 together coordinate Zn(2+). CXXCXGXG motif repeat units lie at residues 150 to 157, 167 to 174, 193 to 200, and 207 to 214; these read CDTCQGSG, CPHCHGSG, CPVCGGTG, and CPTCGGTG. The tract at residues 154-175 is disordered; the sequence is QGSGAKPGTSPTSCPHCHGSGQ.

The protein belongs to the DnaJ family. As to quaternary structure, homodimer. Zn(2+) is required as a cofactor.

The protein localises to the cytoplasm. Functionally, participates actively in the response to hyperosmotic and heat shock by preventing the aggregation of stress-denatured proteins and by disaggregating proteins, also in an autonomous, DnaK-independent fashion. Unfolded proteins bind initially to DnaJ; upon interaction with the DnaJ-bound protein, DnaK hydrolyzes its bound ATP, resulting in the formation of a stable complex. GrpE releases ADP from DnaK; ATP binding to DnaK triggers the release of the substrate protein, thus completing the reaction cycle. Several rounds of ATP-dependent interactions between DnaJ, DnaK and GrpE are required for fully efficient folding. Also involved, together with DnaK and GrpE, in the DNA replication of plasmids through activation of initiation proteins. The sequence is that of Chaperone protein DnaJ from Geobacillus kaustophilus (strain HTA426).